The chain runs to 421 residues: D-amino acid dehydrogenase (421 aa).

Position 3–17 (3–17 (VIVLGSGVIGVASAY)) interacts with FAD.

The protein belongs to the DadA oxidoreductase family. FAD serves as cofactor.

It catalyses the reaction a D-alpha-amino acid + A + H2O = a 2-oxocarboxylate + AH2 + NH4(+). Its pathway is amino-acid degradation; D-alanine degradation; NH(3) and pyruvate from D-alanine: step 1/1. Functionally, oxidative deamination of D-amino acids. In Acinetobacter baumannii (strain ATCC 17978 / DSM 105126 / CIP 53.77 / LMG 1025 / NCDC KC755 / 5377), this protein is D-amino acid dehydrogenase.